We begin with the raw amino-acid sequence, 72 residues long: High-potential iron-sulfur protein isozyme 1 (72 aa).

[4Fe-4S] cluster is bound by residues C34, C37, C51, and C65.

This sequence belongs to the high-potential iron-sulfur protein (HiPIP) family. Homodimer.

In terms of biological role, specific class of high-redox-potential 4Fe-4S ferredoxins. Functions in anaerobic electron transport in most purple and in some other photosynthetic bacteria and in at least one genus (Paracoccus) of halophilic, denitrifying bacteria. This chain is High-potential iron-sulfur protein isozyme 1 (hip1), found in Ectothiorhodospira shaposhnikovii (Ectothiorhodospira vacuolata).